Consider the following 417-residue polypeptide: MPQLSASSLFICLWLVDLCHVANSVLSSSFSDLHTQFGISLYQTLTETENKSNLIVSPASVSLCLGLLQLGARGNTLVQLEGTLGYDVNDVRVQNILSRPQGDLANSSEGLRLQLANALFIQTGVKLLPEFTQHALGWGNTSLLSVNFSNPNHTHSRLQQWAHYQSKADDHLQTREELHHSSGEEEEATRQDHLLYMALVSTLVFHGAWQKQFLFTETQNLPFTFSDGSTVKVPMMYQSSEVNIGHFRLPSEQEYTVLELPYLDHSLRLLVALPSDRKTPLSQLEKQITARAVGLWDTGLRRTKMDIFLPRFKMQSKINLKPVLQSLGVSDIFSPSAADFRGISDTDGIFVSEAFHEARIEVTEAGTKAASATAMVLLKRSRSAVFKADRPFLFILRQISTGSLLFIGRVVNPADMP.

The first 24 residues, 1–24, serve as a signal peptide directing secretion; sequence MPQLSASSLFICLWLVDLCHVANS. N-linked (GlcNAc...) asparagine glycans are attached at residues N50, N106, N140, N147, and N152.

The protein belongs to the serpin family.

The protein localises to the secreted. Functionally, probable serine protease inhibitor. This chain is Probable serpin E3 (serpine3), found in Danio rerio (Zebrafish).